Consider the following 475-residue polypeptide: Aspartyl/glutamyl-tRNA(Asn/Gln) amidotransferase subunit B (475 aa).

Belongs to the GatB/GatE family. GatB subfamily. In terms of assembly, heterotrimer of A, B and C subunits.

The catalysed reaction is L-glutamyl-tRNA(Gln) + L-glutamine + ATP + H2O = L-glutaminyl-tRNA(Gln) + L-glutamate + ADP + phosphate + H(+). The enzyme catalyses L-aspartyl-tRNA(Asn) + L-glutamine + ATP + H2O = L-asparaginyl-tRNA(Asn) + L-glutamate + ADP + phosphate + 2 H(+). In terms of biological role, allows the formation of correctly charged Asn-tRNA(Asn) or Gln-tRNA(Gln) through the transamidation of misacylated Asp-tRNA(Asn) or Glu-tRNA(Gln) in organisms which lack either or both of asparaginyl-tRNA or glutaminyl-tRNA synthetases. The reaction takes place in the presence of glutamine and ATP through an activated phospho-Asp-tRNA(Asn) or phospho-Glu-tRNA(Gln). This chain is Aspartyl/glutamyl-tRNA(Asn/Gln) amidotransferase subunit B, found in Staphylococcus saprophyticus subsp. saprophyticus (strain ATCC 15305 / DSM 20229 / NCIMB 8711 / NCTC 7292 / S-41).